The primary structure comprises 95 residues: UPF0358 protein BCG9842_B1188 (95 aa).

Belongs to the UPF0358 family.

This chain is UPF0358 protein BCG9842_B1188, found in Bacillus cereus (strain G9842).